Consider the following 121-residue polypeptide: Replication protein A 14 kDa subunit (121 aa).

Residues K39 and K88 each participate in a glycyl lysine isopeptide (Lys-Gly) (interchain with G-Cter in ubiquitin) cross-link.

The protein belongs to the replication factor A protein 3 family. In terms of assembly, component of the canonical replication protein A complex (RPA), a heterotrimer composed of RPA1, RPA2 and RPA3. Also a component of the aRPA, the alternative replication protein A complex, a trimeric complex similar to the replication protein A complex/RPA but where RPA1 and RPA3 are associated with RPA4 instead of RPA2. In terms of processing, ubiquitinated by RFWD3 at stalled replication forks in response to DNA damage: ubiquitination by RFWD3 does not lead to degradation by the proteasome and promotes removal of the RPA complex from stalled replication forks, promoting homologous recombination.

The protein localises to the nucleus. In terms of biological role, as part of the heterotrimeric replication protein A complex (RPA/RP-A), binds and stabilizes single-stranded DNA intermediates, that form during DNA replication or upon DNA stress. It prevents their reannealing and in parallel, recruits and activates different proteins and complexes involved in DNA metabolism. Thereby, it plays an essential role both in DNA replication and the cellular response to DNA damage. In the cellular response to DNA damage, the RPA complex controls DNA repair and DNA damage checkpoint activation. Through recruitment of ATRIP activates the ATR kinase a master regulator of the DNA damage response. It is required for the recruitment of the DNA double-strand break repair factors RAD51 and RAD52 to chromatin, in response to DNA damage. Also recruits to sites of DNA damage proteins like XPA and XPG that are involved in nucleotide excision repair and is required for this mechanism of DNA repair. Also plays a role in base excision repair (BER), probably through interaction with UNG. Also recruits SMARCAL1/HARP, which is involved in replication fork restart, to sites of DNA damage. May also play a role in telomere maintenance. RPA3 has its own single-stranded DNA-binding activity and may be responsible for polarity of the binding of the complex to DNA. The protein is Replication protein A 14 kDa subunit (Rpa3) of Mus musculus (Mouse).